A 224-amino-acid chain; its full sequence is Paired immunoglobulin-like type 2 receptor beta (224 aa).

The signal sequence occupies residues 1–28 (MALLISLPGGTPAMAQVLLLLSSGCLHA). At 29–195 (GNSERYNRKN…NPSLMNLGAM (167 aa)) the chain is on the extracellular side. 3 N-linked (GlcNAc...) asparagine glycosylation sites follow: Asn90, Asn107, and Asn154. A helical membrane pass occupies residues 196–216 (VTMLLAKVLVIVLVYGWMIFL). Topologically, residues 217–224 (RWKQRPAH) are cytoplasmic.

In terms of assembly, interacts with CD99. Probably associates with DAP12. As to expression, widely expressed with highest levels in spleen, liver and lung. Predominantly expressed by natural killer cells, macrophages, and granulocytes and dendritic cells (BM-DC).

Its subcellular location is the membrane. Functionally, paired receptors consist of highly related activating and inhibitory receptors and are widely involved in the regulation of the immune system. PILRB is thought to act as a cellular signaling activating receptor that associates with ITAM-bearing adapter molecules on the cell surface. Seems to associate with DAP12 and is a receptor for CD99. May be involved in target cell recognition by natural killer cells and in activation of dendritic cells. The sequence is that of Paired immunoglobulin-like type 2 receptor beta (Pilrb) from Mus musculus (Mouse).